The following is a 731-amino-acid chain: Golgin subfamily A member 5 (731 aa).

Residue Ser2 is modified to N-acetylserine. Over 2–698 the chain is Cytoplasmic; the sequence is SWFVDLAGKA…IFLRRYPIAR (697 aa). Arg89 is subject to Dimethylated arginine. The segment at 93-222 is disordered; sequence EASHPVENAS…PTPNDDGKSH (130 aa). Ser116 is subject to Phosphoserine. Residues 134–146 are compositionally biased toward basic and acidic residues; that stretch reads PTGRVEIRKEKGK. The span at 147–167 shows a compositional bias: low complexity; the sequence is TPVFQSSQTSSVSSVNPSVTT. A compositionally biased stretch (polar residues) spans 173 to 188; the sequence is ENSFGSQTHEAASNSD. The segment covering 189-199 has biased composition (basic and acidic residues); the sequence is SSHEGQEESSK. Residues 216–632 adopt a coiled-coil conformation; the sequence is NDDGKSHELS…EQQMNSASGS (417 aa). The chain crosses the membrane as a helical; Anchor for type IV membrane protein span at residues 699–719; that stretch reads VFVIIYMALLHLWVMIVLLTY. Residues 720–731 lie on the Lumenal side of the membrane; sequence TPEMHHDQPYGK.

In terms of assembly, homodimer. Interacts with RAB1A that has been activated by GTP-binding, and possibly also with OCRL1. Interacts with isoform CASP of CUX1. Post-translationally, highly phosphorylated during mitosis. Phosphorylation is barely detectable during interphase. Ubiquitous. Highly expressed in seminiferous tubules and Leydig cells in testis, and detected at much lower levels in the other tissues tested. Expression is very low or not detectable in spermatozoa.

It localises to the golgi apparatus membrane. Its function is as follows. Involved in maintaining Golgi structure. Stimulates the formation of Golgi stacks and ribbons. Involved in intra-Golgi retrograde transport. The sequence is that of Golgin subfamily A member 5 (GOLGA5) from Homo sapiens (Human).